Consider the following 96-residue polypeptide: Conantokin Rl-C (96 aa).

The first 21 residues, 1-21, serve as a signal peptide directing secretion; that stretch reads MQLYTYLYLLVPLVTFHLILG. Residues 22–78 constitute a propeptide that is removed on maturation; the sequence is TGTLDHGDALTERRSADATALKPEPVLLQKSSARSTDDNGKDTQMKRIFKKRRNKAR. The tract at residues 36-85 is disordered; that stretch reads SADATALKPEPVLLQKSSARSTDDNGKDTQMKRIFKKRRNKARGEEELSE. The segment covering 56–66 has biased composition (basic and acidic residues); that stretch reads STDDNGKDTQM. E81 contacts a divalent metal cation. Residues E81, E82, E85, E89, and E93 each carry the 4-carboxyglutamate modification. A divalent metal cation-binding residues include E85, E89, and E93. An Asparagine amide modification is found at N96.

Belongs to the conotoxin B superfamily. Ca(2+) serves as cofactor. The cofactor is Mg(2+). As to expression, expressed by the venom duct.

The protein localises to the secreted. In terms of biological role, conantokins inhibit N-methyl-D-aspartate (NMDA) receptors. This toxin has antagonist activity on NR2B/GRIN2B (IC(50)=1.4 uM) and NR2A/GRIN2A (IC(50)=2.9 uM) subunits, when tested on rat receptors. In Conus rolani (Cone snail), this protein is Conantokin Rl-C.